The chain runs to 636 residues: Molybdenum cofactor biosynthesis protein 1 (636 aa).

Residues 1–383 are molybdenum cofactor biosynthesis protein A; sequence MAARPAFGIV…QMKNRPMILI (383 aa). The interval 19–40 is disordered; sequence RGCSSGAPVTQPRPGEPSRPTR. Serine 64 carries the post-translational modification Phosphoserine. Positions 64-279 constitute a Radical SAM core domain; sequence SFGRQHSYLR…TIRQRWPGLE (216 aa). Arginine 73 provides a ligand contact to GTP. [4Fe-4S] cluster is bound by residues cysteine 80 and cysteine 84. Tyrosine 86 provides a ligand contact to S-adenosyl-L-methionine. Residue cysteine 87 coordinates [4Fe-4S] cluster. A GTP-binding site is contributed by arginine 123. S-adenosyl-L-methionine is bound at residue glycine 127. GTP is bound at residue threonine 154. Serine 178 contributes to the S-adenosyl-L-methionine binding site. Residue lysine 198 is modified to N6-acetyllysine. Lysine 215 serves as a coordination point for GTP. S-adenosyl-L-methionine is bound at residue methionine 249. [4Fe-4S] cluster-binding residues include cysteine 312 and cysteine 315. GTP is bound at residue 317–319; it reads RLR. [4Fe-4S] cluster is bound at residue cysteine 329. Residues 414–636 are molybdenum cofactor biosynthesis protein C; it reads QCLSDQMASL…GGQRGDFHRA (223 aa). Positions 444-484 are disordered; the sequence is SPQRHYSSYPDPDTHSKCLSTGSQAPDAPSGPGPTSNQLTH. The residue at position 528 (lysine 528) is an N6-acetyllysine. Catalysis depends on aspartate 606, which acts as the For molybdenum cofactor biosynthesis protein C activity.

This sequence in the C-terminal section; belongs to the MoaC family. In the N-terminal section; belongs to the radical SAM superfamily. MoaA family. Isoform Mocs1a and isoform Mocs1b probably form a heterooligomer. The cofactor is [4Fe-4S] cluster.

The catalysed reaction is GTP + AH2 + S-adenosyl-L-methionine = (8S)-3',8-cyclo-7,8-dihydroguanosine 5'-triphosphate + 5'-deoxyadenosine + L-methionine + A + H(+). The enzyme catalyses (8S)-3',8-cyclo-7,8-dihydroguanosine 5'-triphosphate = cyclic pyranopterin phosphate + diphosphate. Its pathway is cofactor biosynthesis; molybdopterin biosynthesis. Functionally, isoform Mocs1a and isoform Mocs1b probably form a complex that catalyzes the conversion of 5'-GTP to cyclic pyranopterin monophosphate (cPMP). Mocs1a catalyzes the cyclization of GTP to (8S)-3',8-cyclo-7,8-dihydroguanosine 5'-triphosphate and Mocs1b catalyzes the subsequent conversion of (8S)-3',8-cyclo-7,8-dihydroguanosine 5'-triphosphate to cPMP. The sequence is that of Molybdenum cofactor biosynthesis protein 1 (Mocs1) from Mus musculus (Mouse).